Consider the following 235-residue polypeptide: Ubiquinone/menaquinone biosynthesis C-methyltransferase UbiE (235 aa).

S-adenosyl-L-methionine contacts are provided by Thr-59, Asp-84, and Ser-123.

Belongs to the class I-like SAM-binding methyltransferase superfamily. MenG/UbiE family.

The catalysed reaction is a 2-demethylmenaquinol + S-adenosyl-L-methionine = a menaquinol + S-adenosyl-L-homocysteine + H(+). The enzyme catalyses a 2-methoxy-6-(all-trans-polyprenyl)benzene-1,4-diol + S-adenosyl-L-methionine = a 5-methoxy-2-methyl-3-(all-trans-polyprenyl)benzene-1,4-diol + S-adenosyl-L-homocysteine + H(+). It participates in quinol/quinone metabolism; menaquinone biosynthesis; menaquinol from 1,4-dihydroxy-2-naphthoate: step 2/2. Its pathway is cofactor biosynthesis; ubiquinone biosynthesis. Its function is as follows. Methyltransferase required for the conversion of demethylmenaquinol (DMKH2) to menaquinol (MKH2) and the conversion of 2-polyprenyl-6-methoxy-1,4-benzoquinol (DDMQH2) to 2-polyprenyl-3-methyl-6-methoxy-1,4-benzoquinol (DMQH2). The sequence is that of Ubiquinone/menaquinone biosynthesis C-methyltransferase UbiE from Campylobacter jejuni subsp. jejuni serotype O:6 (strain 81116 / NCTC 11828).